The chain runs to 153 residues: Transcriptional repressor NrdR (153 aa).

The segment at 3–34 (CPFCGYEDTRVLDSRELSEGRAIRRRRECPQC) is a zinc-finger region. In terms of domain architecture, ATP-cone spans 49–139 (ITVIKKDGRR…VYKDFREIDQ (91 aa)).

The protein belongs to the NrdR family. Requires Zn(2+) as cofactor.

In terms of biological role, negatively regulates transcription of bacterial ribonucleotide reductase nrd genes and operons by binding to NrdR-boxes. This Fervidobacterium nodosum (strain ATCC 35602 / DSM 5306 / Rt17-B1) protein is Transcriptional repressor NrdR.